A 339-amino-acid polypeptide reads, in one-letter code: Methionine import ATP-binding protein MetN 2 (339 aa).

Positions 2–241 (ISFNNVSKVY…PKTKTTQNFV (240 aa)) constitute an ABC transporter domain. 38–45 (GFSGAGKS) serves as a coordination point for ATP.

This sequence belongs to the ABC transporter superfamily. Methionine importer (TC 3.A.1.24) family. As to quaternary structure, the complex is composed of two ATP-binding proteins (MetN), two transmembrane proteins (MetI) and a solute-binding protein (MetQ).

Its subcellular location is the cell membrane. It carries out the reaction L-methionine(out) + ATP + H2O = L-methionine(in) + ADP + phosphate + H(+). The enzyme catalyses D-methionine(out) + ATP + H2O = D-methionine(in) + ADP + phosphate + H(+). Functionally, part of the ABC transporter complex MetNIQ involved in methionine import. Responsible for energy coupling to the transport system. In Bacillus cereus (strain ZK / E33L), this protein is Methionine import ATP-binding protein MetN 2.